A 189-amino-acid chain; its full sequence is Haloacid dehalogenase-like hydrolase domain-containing protein 3 (189 aa).

It belongs to the HAD-like hydrolase superfamily.

The polypeptide is Haloacid dehalogenase-like hydrolase domain-containing protein 3 (hdhd3) (Xenopus tropicalis (Western clawed frog)).